Here is a 554-residue protein sequence, read N- to C-terminus: (+)-delta-cadinene synthase isozyme XC14 (554 aa).

Residues 1-16 (MASQVSQMPSSSPLSS) show a composition bias toward low complexity. Positions 1–23 (MASQVSQMPSSSPLSSNKDEMRP) are disordered. 3 residues coordinate Mg(2+): Asp307, Asp311, and Asp451. A DDXXD motif motif is present at residues 307 to 311 (DDTYD).

Belongs to the terpene synthase family. Mg(2+) is required as a cofactor.

The enzyme catalyses (2E,6E)-farnesyl diphosphate = (1S,8aR)-delta-cadinene + diphosphate. The protein operates within secondary metabolite biosynthesis; terpenoid biosynthesis. Responsible for the cyclization of trans,trans-farnesyl diphosphate (FPP) to (+)-delta cadinene. In Gossypium arboreum (Tree cotton), this protein is (+)-delta-cadinene synthase isozyme XC14.